The following is a 484-amino-acid chain: Adenylosuccinate lyase (484 aa).

The residue at position 2 (A2) is an N-acetylalanine. Substrate contacts are provided by residues 20-21, 85-87, and 111-112; these read RY, RHD, and TS. K147 carries the N6-acetyllysine modification. H159 serves as the catalytic Proton donor/acceptor. Position 241 (Q241) interacts with substrate. The Proton donor/acceptor role is filled by S289. The residue at position 295 (K295) is an N6-acetyllysine. Substrate-binding residues include R303, R329, S334, and R338. Residue K415 forms a Glycyl lysine isopeptide (Lys-Gly) (interchain with G-Cter in SUMO1) linkage.

Belongs to the lyase 1 family. Adenylosuccinate lyase subfamily. In terms of assembly, homotetramer. Residues from neighboring subunits contribute catalytic and substrate-binding residues to each active site.

The enzyme catalyses N(6)-(1,2-dicarboxyethyl)-AMP = fumarate + AMP. It catalyses the reaction (2S)-2-[5-amino-1-(5-phospho-beta-D-ribosyl)imidazole-4-carboxamido]succinate = 5-amino-1-(5-phospho-beta-D-ribosyl)imidazole-4-carboxamide + fumarate. Its pathway is purine metabolism; AMP biosynthesis via de novo pathway; AMP from IMP: step 2/2. It functions in the pathway purine metabolism; IMP biosynthesis via de novo pathway; 5-amino-1-(5-phospho-D-ribosyl)imidazole-4-carboxamide from 5-amino-1-(5-phospho-D-ribosyl)imidazole-4-carboxylate: step 2/2. Functionally, catalyzes two non-sequential steps in de novo AMP synthesis: converts (S)-2-(5-amino-1-(5-phospho-D-ribosyl)imidazole-4-carboxamido)succinate (SAICAR) to fumarate plus 5-amino-1-(5-phospho-D-ribosyl)imidazole-4-carboxamide, and thereby also contributes to de novo IMP synthesis, and converts succinyladenosine monophosphate (SAMP) to AMP and fumarate. This Mus musculus (Mouse) protein is Adenylosuccinate lyase (Adsl).